The sequence spans 503 residues: TGF-beta receptor type-1 (503 aa).

The signal sequence occupies residues 1–33; sequence MEAAVAAPRPRLLLLVLAAAAAAAAALLPGATA. The Extracellular segment spans residues 34-126; sequence LQCFCHLCTK…SSPGLGPVEL (93 aa). 5 cysteine pairs are disulfide-bonded: cysteine 36–cysteine 54, cysteine 38–cysteine 41, cysteine 48–cysteine 71, cysteine 86–cysteine 100, and cysteine 101–cysteine 106. An N-linked (GlcNAc...) asparagine glycan is attached at asparagine 45. The chain crosses the membrane as a helical span at residues 127–147; the sequence is AAVIAGPVCFVCISLMLMVYI. Over 148-503 the chain is Cytoplasmic; the sequence is CHNRTVIHHR…QLSQQEGIKM (356 aa). The residue at position 165 (serine 165) is a Phosphoserine. A GS domain is found at 175–204; sequence TTLKDLIYDMTTSGSGSGLPLLVQRTIART. Phosphothreonine; by TGFBR2 occurs at positions 185 and 186. 3 positions are modified to phosphoserine; by TGFBR2: serine 187, serine 189, and serine 191. The FKBP1A-binding signature appears at 193 to 194; it reads LP. The region spanning 205–495 is the Protein kinase domain; that stretch reads IVLQESIGKG…LRIKKTLSQL (291 aa). Residues 211–219 and lysine 232 each bind ATP; that span reads IGKGRFGEV. Lysine 268 participates in a covalent cross-link: Glycyl lysine isopeptide (Lys-Gly) (interchain with G-Cter in ubiquitin). Aspartate 333 functions as the Proton acceptor in the catalytic mechanism. Lysine 391 participates in a covalent cross-link: Glycyl lysine isopeptide (Lys-Gly) (interchain with G-Cter in SUMO).

It belongs to the protein kinase superfamily. TKL Ser/Thr protein kinase family. TGFB receptor subfamily. Homodimer; in the endoplasmic reticulum but also at the cell membrane. Heterohexamer; TGFB1, TGFB2 and TGFB3 homodimeric ligands assemble a functional receptor composed of two TGFBR1 and TGFBR2 heterodimers to form a ligand-receptor heterohexamer. The respective affinity of TGBRB1 and TGFBR2 for the ligands may modulate the kinetics of assembly of the receptor and may explain the different biological activities of TGFB1, TGFB2 and TGFB3. Component of a complex composed of TSC22D1 (via N-terminus), TGFBR1 and TGFBR2; the interaction between TSC22D1 and TGFBR1 is inhibited by SMAD7 and promoted by TGFB1. Interacts with CD109; inhibits TGF-beta receptor activation in keratinocytes. Interacts with RBPMS. Interacts (unphosphorylated) with FKBP1A; prevents TGFBR1 phosphorylation by TGFBR2 and stabilizes it in the inactive conformation. Interacts with SMAD2, SMAD3 and ZFYVE9; ZFYVE9 recruits SMAD2 and SMAD3 to the TGF-beta receptor. Interacts with TRAF6 and MAP3K7; induces MAP3K7 activation by TRAF6. Interacts with PARD6A; involved in TGF-beta induced epithelial to mesenchymal transition. Interacts with NEDD4L. Interacts with SMAD7, SMURF1 and SMURF2; SMAD7 recruits NEDD4L, SMURF1 and SMURF2 to the TGF-beta receptor. Interacts with USP15 and VPS39. Interacts with SDCBP (via C-terminus). Interacts with CAV1 and this interaction is impaired in the presence of SDCBP. Interacts with APPL1; interaction is TGF beta dependent; mediates trafficking of the TGFBR1 from the endosomes to the nucleus via microtubules in a TRAF6-dependent manner. Interacts with GPR50; this interaction promotes the constitutive activation of SMAD signaling pathway. Mg(2+) serves as cofactor. It depends on Mn(2+) as a cofactor. In terms of processing, phosphorylated at basal levels in the absence of ligand. Activated upon phosphorylation by TGFBR2, mainly in the GS domain. Phosphorylation in the GS domain abrogates FKBP1A-binding. N-Glycosylated. Post-translationally, ubiquitinated; undergoes ubiquitination catalyzed by several E3 ubiquitin ligases including SMURF1, SMURF2 and NEDD4L2. Results in the proteasomal and/or lysosomal degradation of the receptor thereby negatively regulating its activity. Deubiquitinated by USP15, leading to stabilization of the protein and enhanced TGF-beta signal. Its ubiquitination and proteasome-mediated degradation is negatively regulated by SDCBP. Ubiquitinated by BFAR via'Lys-63'-linked ubiquitination at Lys-268, leading to TGF-beta signaling activation. In terms of tissue distribution, found in all tissues examined, most abundant in placenta and least abundant in brain and heart. Expressed in a variety of cancer cell lines.

It is found in the cell membrane. The protein localises to the cell junction. It localises to the tight junction. The protein resides in the cell surface. Its subcellular location is the membrane raft. The catalysed reaction is L-threonyl-[receptor-protein] + ATP = O-phospho-L-threonyl-[receptor-protein] + ADP + H(+). The enzyme catalyses L-seryl-[receptor-protein] + ATP = O-phospho-L-seryl-[receptor-protein] + ADP + H(+). Kept in an inactive conformation by FKBP1A preventing receptor activation in absence of ligand. CD109 is another inhibitor of the receptor. Transmembrane serine/threonine kinase forming with the TGF-beta type II serine/threonine kinase receptor, TGFBR2, the non-promiscuous receptor for the TGF-beta cytokines TGFB1, TGFB2 and TGFB3. Transduces the TGFB1, TGFB2 and TGFB3 signal from the cell surface to the cytoplasm and is thus regulating a plethora of physiological and pathological processes including cell cycle arrest in epithelial and hematopoietic cells, control of mesenchymal cell proliferation and differentiation, wound healing, extracellular matrix production, immunosuppression and carcinogenesis. The formation of the receptor complex composed of 2 TGFBR1 and 2 TGFBR2 molecules symmetrically bound to the cytokine dimer results in the phosphorylation and the activation of TGFBR1 by the constitutively active TGFBR2. Activated TGFBR1 phosphorylates SMAD2 which dissociates from the receptor and interacts with SMAD4. The SMAD2-SMAD4 complex is subsequently translocated to the nucleus where it modulates the transcription of the TGF-beta-regulated genes. This constitutes the canonical SMAD-dependent TGF-beta signaling cascade. Also involved in non-canonical, SMAD-independent TGF-beta signaling pathways. For instance, TGFBR1 induces TRAF6 autoubiquitination which in turn results in MAP3K7 ubiquitination and activation to trigger apoptosis. Also regulates epithelial to mesenchymal transition through a SMAD-independent signaling pathway through PARD6A phosphorylation and activation. This is TGF-beta receptor type-1 (TGFBR1) from Homo sapiens (Human).